The chain runs to 408 residues: DNA primase DnaG (408 aa).

In terms of domain architecture, Toprim spans E166–P241. Mg(2+) contacts are provided by E172, D215, and D217.

This sequence belongs to the archaeal DnaG primase family. As to quaternary structure, forms a ternary complex with MCM helicase and DNA. Component of the archaeal exosome complex. Mg(2+) is required as a cofactor.

It catalyses the reaction ssDNA + n NTP = ssDNA/pppN(pN)n-1 hybrid + (n-1) diphosphate.. RNA polymerase that catalyzes the synthesis of short RNA molecules used as primers for DNA polymerase during DNA replication. Also part of the exosome, which is a complex involved in RNA degradation. Acts as a poly(A)-binding protein that enhances the interaction between heteromeric, adenine-rich transcripts and the exosome. This Desulfurococcus amylolyticus (strain DSM 18924 / JCM 16383 / VKM B-2413 / 1221n) (Desulfurococcus kamchatkensis) protein is DNA primase DnaG.